A 390-amino-acid chain; its full sequence is Protein phosphatase 1B (390 aa).

The span at 1-14 shows a compositional bias: basic and acidic residues; sequence MGAFLDKPKTEKHN. Residues 1 to 20 form a disordered region; that stretch reads MGAFLDKPKTEKHNAHGAGN. Gly-2 is lipidated: N-myristoyl glycine. Lys-12 participates in a covalent cross-link: Glycyl lysine isopeptide (Lys-Gly) (interchain with G-Cter in ISG15). Residues 23 to 295 enclose the PPM-type phosphatase domain; that stretch reads RYGLSSMQGW…DNMSVVLVCF (273 aa). Mn(2+) contacts are provided by Asp-60, Gly-61, Asp-243, and Asp-286. Residues 371-390 form a disordered region; it reads NPHKDNDGGAGDLEDSLVAL. Position 386 is a phosphoserine (Ser-386).

Belongs to the PP2C family. Monomer. Interacts with PAK6. Interacts with the phosphorylated form of IKBKB/IKKB. The cofactor is Mg(2+). Mn(2+) serves as cofactor. Post-translationally, isgylation negatively regulates its activity. In terms of processing, N-myristoylation is essential for the recognition of its substrates for dephosphorylation. Isoform 1: Expressed ubiquitously. Isoform 2: Expressed exclusively in testis and intestine. Isoform 3: Expressed exclusively in brain and intestine. Isoform 4: Expressed exclusively in testis and intestine.

The protein resides in the cytoplasm. It localises to the cytosol. It is found in the membrane. The enzyme catalyses O-phospho-L-seryl-[protein] + H2O = L-seryl-[protein] + phosphate. It carries out the reaction O-phospho-L-threonyl-[protein] + H2O = L-threonyl-[protein] + phosphate. Enzyme with a broad specificity. Dephosphorylates PRKAA1 and PRKAA2. Inhibits TBK1-mediated antiviral signaling by dephosphorylating it at 'Ser-172'. Plays an important role in the termination of TNF-alpha-mediated NF-kappa-B activation through dephosphorylating and inactivating IKBKB/IKKB. This chain is Protein phosphatase 1B (Ppm1b), found in Mus musculus (Mouse).